Consider the following 1067-residue polypeptide: Chitinase-like protein C25A8.4 (1067 aa).

A signal peptide spans 1 to 18 (MGIKTLIWLSILVVGIYC). GH18 domains lie at 26–364 (PVHY…IRNT), 372–727 (CTRL…QVCQ), and 743–1067 (FVVS…HKCR). Cysteine 30 and cysteine 51 form a disulfide bridge. 2 N-linked (GlcNAc...) asparagine glycosylation sites follow: asparagine 47 and asparagine 216. Cysteine 376 and cysteine 397 are joined by a disulfide. 3 N-linked (GlcNAc...) asparagine glycosylation sites follow: asparagine 475, asparagine 538, and asparagine 710. A disulfide bond links cysteine 747 and cysteine 768. N-linked (GlcNAc...) asparagine glycosylation is found at asparagine 797 and asparagine 830. Glutamate 855 acts as the Proton donor in catalysis. N-linked (GlcNAc...) asparagine glycosylation is found at asparagine 887, asparagine 933, and asparagine 1010.

It belongs to the glycosyl hydrolase 18 family.

The protein localises to the secreted. Its function is as follows. Putative chitinase. This chain is Chitinase-like protein C25A8.4 (cht-3), found in Caenorhabditis elegans.